The following is a 397-amino-acid chain: Probable sugar efflux transporter (397 aa).

Helical transmembrane passes span 15–35, 51–71, 80–100, 103–123, 137–157, 169–189, 209–229, 246–266, 277–297, 299–319, 333–353, and 365–385; these read VIVM…PVAL, GLMI…CMLM, LLIS…FAWN, VLLI…SITA, QALG…LPLG, TFTL…RLLP, PMLI…FTAY, KATA…VLFS, LLSS…VSGI, GAIF…SLAM, VATA…ALIG, and IGYV…LMFL.

Belongs to the major facilitator superfamily. SotB (TC 2.A.1.2) family.

It localises to the cell inner membrane. Its function is as follows. Involved in the efflux of sugars. The physiological role may be the reduction of the intracellular concentration of toxic sugars or sugar metabolites. In Mannheimia succiniciproducens (strain KCTC 0769BP / MBEL55E), this protein is Probable sugar efflux transporter.